The primary structure comprises 274 residues: Eukaryotic translation initiation factor 3 subunit G (274 aa).

The region spanning 192–270 is the RRM domain; sequence TAIRISNLSN…LILNVEWSKP (79 aa).

This sequence belongs to the eIF-3 subunit G family. Component of the eukaryotic translation initiation factor 3 (eIF-3) complex.

It is found in the cytoplasm. In terms of biological role, RNA-binding component of the eukaryotic translation initiation factor 3 (eIF-3) complex, which is involved in protein synthesis of a specialized repertoire of mRNAs and, together with other initiation factors, stimulates binding of mRNA and methionyl-tRNAi to the 40S ribosome. The eIF-3 complex specifically targets and initiates translation of a subset of mRNAs involved in cell proliferation. This subunit can bind 18S rRNA. The polypeptide is Eukaryotic translation initiation factor 3 subunit G (Bombyx mori (Silk moth)).